The primary structure comprises 51 residues: Large ribosomal subunit protein bL32c (51 aa).

Belongs to the bacterial ribosomal protein bL32 family.

It is found in the plastid. The protein localises to the chloroplast. The chain is Large ribosomal subunit protein bL32c from Oenothera elata subsp. hookeri (Hooker's evening primrose).